The primary structure comprises 351 residues: Photosystem II D2 protein (351 aa).

The chain crosses the membrane as a helical span at residues C39–T59. H116 is a chlorophyll a binding site. Residues G123–P139 traverse the membrane as a helical segment. 2 residues coordinate pheophytin a: Q128 and N141. The chain crosses the membrane as a helical span at residues V151–S164. H196 provides a ligand contact to chlorophyll a. Residues G206–D226 form a helical membrane-spanning segment. 2 residues coordinate a plastoquinone: H213 and F260. Residue H213 coordinates Fe cation. H267 contacts Fe cation. Residues G277–R293 form a helical membrane-spanning segment.

This sequence belongs to the reaction center PufL/M/PsbA/D family. As to quaternary structure, PSII is composed of 1 copy each of membrane proteins PsbA, PsbB, PsbC, PsbD, PsbE, PsbF, PsbH, PsbI, PsbJ, PsbK, PsbL, PsbM, PsbT, PsbX, PsbY, PsbZ, Psb30/Ycf12, peripheral proteins PsbO, CyanoQ (PsbQ), PsbU, PsbV and a large number of cofactors. It forms dimeric complexes. The cofactor is The D1/D2 heterodimer binds P680, chlorophylls that are the primary electron donor of PSII, and subsequent electron acceptors. It shares a non-heme iron and each subunit binds pheophytin, quinone, additional chlorophylls, carotenoids and lipids. There is also a Cl(-1) ion associated with D1 and D2, which is required for oxygen evolution. The PSII complex binds additional chlorophylls, carotenoids and specific lipids..

Its subcellular location is the cellular thylakoid membrane. It catalyses the reaction 2 a plastoquinone + 4 hnu + 2 H2O = 2 a plastoquinol + O2. Functionally, photosystem II (PSII) is a light-driven water:plastoquinone oxidoreductase that uses light energy to abstract electrons from H(2)O, generating O(2) and a proton gradient subsequently used for ATP formation. It consists of a core antenna complex that captures photons, and an electron transfer chain that converts photonic excitation into a charge separation. The D1/D2 (PsbA/PsbD) reaction center heterodimer binds P680, the primary electron donor of PSII as well as several subsequent electron acceptors. D2 is needed for assembly of a stable PSII complex. This chain is Photosystem II D2 protein, found in Nostoc punctiforme (strain ATCC 29133 / PCC 73102).